A 173-amino-acid polypeptide reads, in one-letter code: Protein TraS (173 aa).

It localises to the cell inner membrane. Functionally, involved in surface exclusion. This is Protein TraS (traS) from Escherichia coli (strain K12).